A 290-amino-acid chain; its full sequence is HTH-type transcriptional regulator BsdA (290 aa).

In terms of domain architecture, HTH lysR-type spans 1-59 (MDIRQLRYFITIAQEQKITSAAKKLHMAQPPLSRQLKQLEDELGVVLFDRNKKKQMTLT). The H-T-H motif DNA-binding region spans 18–37 (ITSAAKKLHMAQPPLSRQLK).

The protein belongs to the LysR transcriptional regulatory family.

Its function is as follows. Could be a positive regulator of bsdBCD expression in response to salicylic acid. This Bacillus subtilis (strain 168) protein is HTH-type transcriptional regulator BsdA (bsdA).